A 448-amino-acid chain; its full sequence is Nicotinate phosphoribosyltransferase pncB1 (448 aa).

The segment at 1 to 21 (MGPPPAARRREGEPDNQDPAG) is disordered. Position 212 is a phosphohistidine (histidine 212). The segment at 353 to 372 (RSSYKESPGGRKEALRRSRA) is disordered.

It belongs to the NAPRTase family. Post-translationally, transiently phosphorylated on a His residue during the reaction cycle. Phosphorylation strongly increases the affinity for substrates and increases the rate of nicotinate D-ribonucleotide production. Dephosphorylation regenerates the low-affinity form of the enzyme, leading to product release.

The enzyme catalyses nicotinate + 5-phospho-alpha-D-ribose 1-diphosphate + ATP + H2O = nicotinate beta-D-ribonucleotide + ADP + phosphate + diphosphate. It functions in the pathway cofactor biosynthesis; NAD(+) biosynthesis; nicotinate D-ribonucleotide from nicotinate: step 1/1. Involved in the Preiss-Handler pathway, which is a recycling route that permits the salvage of free nicotinamide (NM) and nicotinic acid (Na) involved in the NAD biosynthesis. Catalyzes the synthesis of beta-nicotinate D-ribonucleotide from nicotinate and 5-phospho-D-ribose 1-phosphate at the expense of ATP. It is not able to use nicotinamide. PncB1 contributes to basal NAD level. This Mycobacterium tuberculosis (strain CDC 1551 / Oshkosh) protein is Nicotinate phosphoribosyltransferase pncB1 (pncB1).